A 468-amino-acid chain; its full sequence is ATP synthase subunit beta (468 aa).

153–160 (GGAGVGKT) contacts ATP.

The protein belongs to the ATPase alpha/beta chains family. In terms of assembly, F-type ATPases have 2 components, CF(1) - the catalytic core - and CF(0) - the membrane proton channel. CF(1) has five subunits: alpha(3), beta(3), gamma(1), delta(1), epsilon(1). CF(0) has three main subunits: a(1), b(2) and c(9-12). The alpha and beta chains form an alternating ring which encloses part of the gamma chain. CF(1) is attached to CF(0) by a central stalk formed by the gamma and epsilon chains, while a peripheral stalk is formed by the delta and b chains.

The protein localises to the cell inner membrane. The enzyme catalyses ATP + H2O + 4 H(+)(in) = ADP + phosphate + 5 H(+)(out). Functionally, produces ATP from ADP in the presence of a proton gradient across the membrane. The catalytic sites are hosted primarily by the beta subunits. The polypeptide is ATP synthase subunit beta (Nautilia profundicola (strain ATCC BAA-1463 / DSM 18972 / AmH)).